A 444-amino-acid chain; its full sequence is MAERKFFGTDGIRGLVGEGPITPEFVLKLGWAAGRVLSQQGTKKVLIGKDTRISGYMLESALEAGLAAAGLQQFTGPMPTPAVAYLTRTFRAEAGIVISASHNPYYDNGIKFFSSEGTKLPDAIELAIEAEMEKPLTCVESAMLGKAYRINDAAGRYIEFCKGTFPSQYDLSEYKIVVDCAHGATYHIAPNVFRELGAEVITIGCEPNGININDQVGATDVRALQAKVLEEKADFGIALDGDGDRVIMVDNEGNKVDGDQIAYIVARDALRRGELKGGVVGTLMTNLGMEVALKNLGIPFVRSKVGDRYVMEELQKHNWLIGAENSGHVILLDKITTGDGIVAGLQVMASIVGSKMTLKELSDGMTLFPQVLENIRFKGEGNPLESDAVIAAQKAVEAKLGDTGRVLLRKSGTEPLIRVMVEGENADLVQQYALEIAQAVKDNC.

The active-site Phosphoserine intermediate is S101. 4 residues coordinate Mg(2+): S101, D240, D242, and D244. S101 carries the post-translational modification Phosphoserine.

The protein belongs to the phosphohexose mutase family. Mg(2+) serves as cofactor. Activated by phosphorylation.

It carries out the reaction alpha-D-glucosamine 1-phosphate = D-glucosamine 6-phosphate. Its function is as follows. Catalyzes the conversion of glucosamine-6-phosphate to glucosamine-1-phosphate. The protein is Phosphoglucosamine mutase of Photobacterium profundum (strain SS9).